Consider the following 29-residue polypeptide: Cyclotide mela-7 (29 aa).

Positions 1–29 (GLPTCGETCFKGKCYTPGCSCSYPICKKN) form a cross-link, cyclopeptide (Gly-Asn). 3 cysteine pairs are disulfide-bonded: cysteine 5/cysteine 19, cysteine 9/cysteine 21, and cysteine 14/cysteine 26.

In terms of processing, this is a cyclic peptide. Post-translationally, contains 3 disulfide bonds.

In terms of biological role, probably participates in a plant defense mechanism (Potential). Binds to and induces leakage in phospholipd membranes, particularly ones containing 1-palmitoyl-2-oleophosphatidylethanolamine (POPE). In vitro, displays cytotoxicity against cultured cells but no hemolytic activity towards fresh erythrocytes. Not active against Gram-negative bacterium E.coli ATCC 25922 or Gram-positive bacterium S.aureus ATCC 25923 up to a concentration of 64 uM. In Melicytus latifolius (Norfolk Island mahoe), this protein is Cyclotide mela-7.